The sequence spans 994 residues: Bifunctional glutamine synthetase adenylyltransferase/adenylyl-removing enzyme (994 aa).

Residues 1–487 (MVVTKLATQR…LHTKLFYQPL (487 aa)) are adenylyl removase. Residues 492-994 (GPTGLEIAHG…KAVVRKVFGS (503 aa)) are adenylyl transferase.

Belongs to the GlnE family. The cofactor is Mg(2+).

It catalyses the reaction [glutamine synthetase]-O(4)-(5'-adenylyl)-L-tyrosine + phosphate = [glutamine synthetase]-L-tyrosine + ADP. The catalysed reaction is [glutamine synthetase]-L-tyrosine + ATP = [glutamine synthetase]-O(4)-(5'-adenylyl)-L-tyrosine + diphosphate. Its function is as follows. Involved in the regulation of glutamine synthetase GlnA, a key enzyme in the process to assimilate ammonia. When cellular nitrogen levels are high, the C-terminal adenylyl transferase (AT) inactivates GlnA by covalent transfer of an adenylyl group from ATP to specific tyrosine residue of GlnA, thus reducing its activity. Conversely, when nitrogen levels are low, the N-terminal adenylyl removase (AR) activates GlnA by removing the adenylyl group by phosphorolysis, increasing its activity. The regulatory region of GlnE binds the signal transduction protein PII (GlnB) which indicates the nitrogen status of the cell. The polypeptide is Bifunctional glutamine synthetase adenylyltransferase/adenylyl-removing enzyme (Mycobacterium tuberculosis (strain CDC 1551 / Oshkosh)).